We begin with the raw amino-acid sequence, 288 residues long: MEIIIISGHSGAGKSVALRCLEDIGYYCVDNLPLDLLPQLASILSTNQQSVAISLDIRNLPHSSKTLENLLTEVQQQHQIKLIFLDADRGTLIRRYSDSRRLHPLSTQDLSLEAAIDAERKYLDPLTQHADLIIDTTRLSTHELAERLRDFLCEKSDKALKIIFQSFGFKYGLPLDADYVFDVRFLPNPHWIPELRPLTGLDAPVAEFLNKQNEVNHFIYLTRNYIETWLPMLEQNNRSYLTIAIGCTGGKHRSVYITEQLGEYFQAKGKNVQIQHKSLAKHKKANTQ.

8–15 (GHSGAGKS) provides a ligand contact to ATP. 56–59 (DIRN) provides a ligand contact to GTP.

It belongs to the RapZ-like family.

Functionally, displays ATPase and GTPase activities. The sequence is that of Nucleotide-binding protein PM0169 from Pasteurella multocida (strain Pm70).